Consider the following 447-residue polypeptide: Delta(5) fatty acid desaturase fat-4 (447 aa).

One can recognise a Cytochrome b5 heme-binding domain in the interval 1–80; sequence MVLREQEHEP…TQEPEIPDIK (80 aa). The next 4 membrane-spanning stretches (helical) occupy residues 137-157, 257-277, 292-312, and 319-339; these read IFTILFAFYLQYHTYYLPSAI, WTFMLPFLRLSWLLQSIIFVS, IYEQVGLSLHWAWSLGQLYFL, and IMFFLVSHLVGGFLLSHVVTF.

Belongs to the fatty acid desaturase type 1 family.

Its subcellular location is the membrane. It carries out the reaction (11Z,14Z)-eicosadienoyl-CoA + 2 Fe(II)-[cytochrome b5] + O2 + 2 H(+) = (5Z,11Z,14Z)-eicosatrienoyl-CoA + 2 Fe(III)-[cytochrome b5] + 2 H2O. It catalyses the reaction (11Z,14Z,17Z)-eicosatrienoyl-CoA + 2 Fe(II)-[cytochrome b5] + O2 + 2 H(+) = (5Z,11Z,14Z,17Z)-eicosatetraenoyl-CoA + 2 Fe(III)-[cytochrome b5] + 2 H2O. The enzyme catalyses (8Z,11Z,14Z,17Z)-eicosatetraenoyl-CoA + 2 Fe(II)-[cytochrome b5] + O2 + 2 H(+) = (5Z,8Z,11Z,14Z,17Z)-eicosapentaenoyl-CoA + 2 Fe(III)-[cytochrome b5] + 2 H2O. The catalysed reaction is (8Z,11Z,14Z)-eicosatrienoyl-CoA + 2 Fe(II)-[cytochrome b5] + O2 + 2 H(+) = (5Z,8Z,11Z,14Z)-eicosatetraenoyl-CoA + 2 Fe(III)-[cytochrome b5] + 2 H2O. It functions in the pathway lipid metabolism; polyunsaturated fatty acid biosynthesis. Can function as a Delta(5) fatty acid desaturase and behaves as a (8-3) desaturase. Introduces a double bond in the fatty acid chain 5 carbons away from carboxy terminal to biosynthesize polyunsaturated fatty acids (PUFAs) endogenously (PUFAs are essential for membrane structure and many cellular and physiological processes). Acts on a variety of substrates such as dihomo-gamma-linoleoyl-CoA ((8Z,11Z,14Z)-eicosatrienoyl-CoA, 20:3n-6) to generate arachidonoyl-CoA ((5Z,8Z,11Z,14Z)-eicosatetraenoyl-CoA, 20:4n-6). Also acts on a number of other substrates, including fatty acids that do not contain a double bond at the 8 position like (11Z,14Z,17Z)-eicosatrienoyl-CoA (20:3n-3) to produce (5Z,11Z,14Z,17Z)-eicosatetraenoyl-CoA (20:4n-3). Unlike plants, Caenorhabditis elegans desaturases seem to use fatty acyl-CoAs as substrates. This Caenorhabditis elegans protein is Delta(5) fatty acid desaturase fat-4 (fat-4).